The primary structure comprises 206 residues: MAAAKDTHEDHDTSTENADESNHDPQFEPIVSLPEQEIKTLEEDEEELFKMRAKLFRFASENDLPEWKERGTGDVKLLKHKEKGTIRLLMRRDKTLKICANHYITPMMELKPNAGSDRAWVWNTHADFADECPKQELLAIRFLNAENAQKFKTKFEECRKEIEEKEKKGSGKNDSTEKVVEKLEALSVQEGEQPQDAAPAAVEEEQ.

Over residues 1–26 the composition is skewed to basic and acidic residues; sequence MAAAKDTHEDHDTSTENADESNHDPQ. The disordered stretch occupies residues 1-33; the sequence is MAAAKDTHEDHDTSTENADESNHDPQFEPIVSL. An N-acetylalanine modification is found at Ala-2. Thr-13 is subject to Phosphothreonine. Residues Ser-21 and Ser-60 each carry the phosphoserine modification. In terms of domain architecture, RanBD1 spans 26-164; sequence QFEPIVSLPE…FEECRKEIEE (139 aa). Lys-150 is modified (N6-acetyllysine; alternate). Lys-150 is modified (N6-succinyllysine; alternate). Basic and acidic residues predominate over residues 162–184; the sequence is IEEKEKKGSGKNDSTEKVVEKLE. Positions 162-206 are disordered; it reads IEEKEKKGSGKNDSTEKVVEKLEALSVQEGEQPQDAAPAAVEEEQ. Lys-182 carries the post-translational modification N6-acetyllysine. Ser-187 is modified (phosphoserine).

This sequence belongs to the RANBP1 family. In terms of assembly, interacts with RAN (via C-terminus of GTP-bound form) but not with GDP-bound RAN. Identified in a complex composed of RAN, RANGAP1 and RANBP1. Identified in a complex that contains TNPO1, RAN and RANBP1. Identified in a complex that contains CSE1L, KPNA2, RAN and RANBP1. Identified in a complex with nucleotide-free RAN and RCC1.

Its function is as follows. Plays a role in RAN-dependent nucleocytoplasmic transport. Alleviates the TNPO1-dependent inhibition of RAN GTPase activity and mediates the dissociation of RAN from proteins involved in transport into the nucleus. Induces a conformation change in the complex formed by XPO1 and RAN that triggers the release of the nuclear export signal of cargo proteins. Promotes the disassembly of the complex formed by RAN and importin beta. Promotes dissociation of RAN from a complex with KPNA2 and CSE1L. Required for normal mitotic spindle assembly and normal progress through mitosis via its effect on RAN. Does not increase the RAN GTPase activity by itself, but increases GTP hydrolysis mediated by RANGAP1. Inhibits RCC1-dependent exchange of RAN-bound GDP by GTP. The chain is Ran-specific GTPase-activating protein (RANBP1) from Bos taurus (Bovine).